Reading from the N-terminus, the 461-residue chain is Elongation factor 1-alpha, oocyte form (461 aa).

G2 is modified (n,N,N-trimethylglycine). The tr-type G domain occupies 5–242 (KIHINIVVIG…DCIIPPQRPT (238 aa)). The segment at 14-21 (GHVDSGKS) is G1. 14-21 (GHVDSGKS) is a GTP binding site. Positions 70–74 (GITID) are G2. Residues 91 to 94 (DAPG) are G3. Residues 91-95 (DAPGH) and 153-156 (NKMD) contribute to the GTP site. Residues 153–156 (NKMD) are G4. The segment at 194–196 (SGW) is G5. 2 positions are modified to 5-glutamyl glycerylphosphorylethanolamine: E301 and E374.

The protein belongs to the TRAFAC class translation factor GTPase superfamily. Classic translation factor GTPase family. EF-Tu/EF-1A subfamily. In terms of tissue distribution, oocyte.

Its subcellular location is the cytoplasm. This protein promotes the GTP-dependent binding of aminoacyl-tRNA to the A-site of ribosomes during protein biosynthesis. In Xenopus laevis (African clawed frog), this protein is Elongation factor 1-alpha, oocyte form (eef1ao).